The chain runs to 309 residues: Gamma-hemolysin component A (309 aa).

The first 29 residues, 1–29 (MIKNKILTATLAVGLIAPLANPFIEISKA), serve as a signal peptide directing secretion.

Belongs to the aerolysin family. As to quaternary structure, toxicity requires sequential binding and synergistic association of a class S and a class F component which form heterooligomeric complexes. HlgA (class S) associates with HlgB (class F) thus forming an AB toxin in strains producing both gamma-hemolysins and leukocidins. HlgA and LukF-PV can also form a complex.

It is found in the secreted. Its function is as follows. Toxin that seems to act by forming pores in the membrane of the cell. Has a hemolytic and a leucotoxic activity. This is Gamma-hemolysin component A (hlgA) from Staphylococcus aureus (strain MRSA252).